The chain runs to 151 residues: SsrA-binding protein (151 aa).

This sequence belongs to the SmpB family.

It is found in the cytoplasm. Its function is as follows. Required for rescue of stalled ribosomes mediated by trans-translation. Binds to transfer-messenger RNA (tmRNA), required for stable association of tmRNA with ribosomes. tmRNA and SmpB together mimic tRNA shape, replacing the anticodon stem-loop with SmpB. tmRNA is encoded by the ssrA gene; the 2 termini fold to resemble tRNA(Ala) and it encodes a 'tag peptide', a short internal open reading frame. During trans-translation Ala-aminoacylated tmRNA acts like a tRNA, entering the A-site of stalled ribosomes, displacing the stalled mRNA. The ribosome then switches to translate the ORF on the tmRNA; the nascent peptide is terminated with the 'tag peptide' encoded by the tmRNA and targeted for degradation. The ribosome is freed to recommence translation, which seems to be the essential function of trans-translation. The polypeptide is SsrA-binding protein (Nitrosomonas europaea (strain ATCC 19718 / CIP 103999 / KCTC 2705 / NBRC 14298)).